The following is a 697-amino-acid chain: Elongation factor G 2 (697 aa).

A tr-type G domain is found at 5–280; it reads SKYRNIGIFA…AVVDYLPAPD (276 aa). GTP is bound by residues 14–21, 78–82, and 132–135; these read AHVDAGKT, DTPGH, and NKLD.

Belongs to the TRAFAC class translation factor GTPase superfamily. Classic translation factor GTPase family. EF-G/EF-2 subfamily.

The protein localises to the cytoplasm. Its function is as follows. Catalyzes the GTP-dependent ribosomal translocation step during translation elongation. During this step, the ribosome changes from the pre-translocational (PRE) to the post-translocational (POST) state as the newly formed A-site-bound peptidyl-tRNA and P-site-bound deacylated tRNA move to the P and E sites, respectively. Catalyzes the coordinated movement of the two tRNA molecules, the mRNA and conformational changes in the ribosome. In Shewanella oneidensis (strain ATCC 700550 / JCM 31522 / CIP 106686 / LMG 19005 / NCIMB 14063 / MR-1), this protein is Elongation factor G 2 (fusB).